Consider the following 263-residue polypeptide: Protein STK_14130 (263 aa).

The protein belongs to the CinA family.

This Sulfurisphaera tokodaii (strain DSM 16993 / JCM 10545 / NBRC 100140 / 7) (Sulfolobus tokodaii) protein is Protein STK_14130.